The chain runs to 237 residues: Octopine transport system permease protein OccQ (237 aa).

An ABC transmembrane type-1 domain is found at 22-222; that stretch reads TAMTMAVAFS…LITFVSGQVF (201 aa). A run of 4 helical transmembrane segments spans residues 26-46, 72-92, 96-116, and 202-222; these read MAVA…GAAA, LVIY…ASLF, GFVG…VSGA, and SFYL…GQVF.

It belongs to the binding-protein-dependent transport system permease family. HisMQ subfamily.

It is found in the cell inner membrane. Functionally, component of the octopine active transport system probably consisting of four subunits: Q, M, P and T. The polypeptide is Octopine transport system permease protein OccQ (occQ) (Agrobacterium tumefaciens (strain Ach5)).